Consider the following 338-residue polypeptide: Aspartate carbamoyltransferase catalytic subunit (338 aa).

Positions 57 and 58 each coordinate carbamoyl phosphate. Lys86 contacts L-aspartate. Positions 107, 135, and 138 each coordinate carbamoyl phosphate. L-aspartate contacts are provided by Arg172 and Arg234. Residues Leu274 and Pro275 each contribute to the carbamoyl phosphate site.

The protein belongs to the aspartate/ornithine carbamoyltransferase superfamily. ATCase family. Heterododecamer (2C3:3R2) of six catalytic PyrB chains organized as two trimers (C3), and six regulatory PyrI chains organized as three dimers (R2).

The enzyme catalyses carbamoyl phosphate + L-aspartate = N-carbamoyl-L-aspartate + phosphate + H(+). The protein operates within pyrimidine metabolism; UMP biosynthesis via de novo pathway; (S)-dihydroorotate from bicarbonate: step 2/3. Its function is as follows. Catalyzes the condensation of carbamoyl phosphate and aspartate to form carbamoyl aspartate and inorganic phosphate, the committed step in the de novo pyrimidine nucleotide biosynthesis pathway. The polypeptide is Aspartate carbamoyltransferase catalytic subunit (Cellvibrio japonicus (strain Ueda107) (Pseudomonas fluorescens subsp. cellulosa)).